The sequence spans 168 residues: G/U mismatch-specific DNA glycosylase (168 aa).

The protein belongs to the uracil-DNA glycosylase (UDG) superfamily. TDG/mug family. In terms of assembly, binds DNA as a monomer.

It localises to the cytoplasm. The enzyme catalyses Specifically hydrolyzes mismatched double-stranded DNA and polynucleotides, releasing free uracil.. Functionally, excises ethenocytosine and uracil, which can arise by alkylation or deamination of cytosine, respectively, from the corresponding mispairs with guanine in ds-DNA. It is capable of hydrolyzing the carbon-nitrogen bond between the sugar-phosphate backbone of the DNA and the mispaired base. The complementary strand guanine functions in substrate recognition. Required for DNA damage lesion repair in stationary-phase cells. This Klebsiella pneumoniae subsp. pneumoniae (strain ATCC 700721 / MGH 78578) protein is G/U mismatch-specific DNA glycosylase.